Consider the following 433-residue polypeptide: Serine hydroxymethyltransferase (433 aa).

Residues leucine 132 and 136–138 contribute to the (6S)-5,6,7,8-tetrahydrofolate site; that span reads GHL. At lysine 241 the chain carries N6-(pyridoxal phosphate)lysine.

The protein belongs to the SHMT family. As to quaternary structure, homodimer. It depends on pyridoxal 5'-phosphate as a cofactor.

It is found in the cytoplasm. The enzyme catalyses (6R)-5,10-methylene-5,6,7,8-tetrahydrofolate + glycine + H2O = (6S)-5,6,7,8-tetrahydrofolate + L-serine. It participates in one-carbon metabolism; tetrahydrofolate interconversion. The protein operates within amino-acid biosynthesis; glycine biosynthesis; glycine from L-serine: step 1/1. In terms of biological role, catalyzes the reversible interconversion of serine and glycine with tetrahydrofolate (THF) serving as the one-carbon carrier. This reaction serves as the major source of one-carbon groups required for the biosynthesis of purines, thymidylate, methionine, and other important biomolecules. Also exhibits THF-independent aldolase activity toward beta-hydroxyamino acids, producing glycine and aldehydes, via a retro-aldol mechanism. The sequence is that of Serine hydroxymethyltransferase from Nitrobacter winogradskyi (strain ATCC 25391 / DSM 10237 / CIP 104748 / NCIMB 11846 / Nb-255).